The primary structure comprises 159 residues: Ribosome maturation factor RimM (159 aa).

One can recognise a PRC barrel domain in the interval 86-159; the sequence is SDAFHLPKLI…IHIETIEGLI (74 aa).

This sequence belongs to the RimM family. As to quaternary structure, binds ribosomal protein uS19.

It is found in the cytoplasm. An accessory protein needed during the final step in the assembly of 30S ribosomal subunit, possibly for assembly of the head region. Essential for efficient processing of 16S rRNA. May be needed both before and after RbfA during the maturation of 16S rRNA. It has affinity for free ribosomal 30S subunits but not for 70S ribosomes. This is Ribosome maturation factor RimM from Acholeplasma laidlawii (strain PG-8A).